The chain runs to 220 residues: Large ribosomal subunit protein bL9 (220 aa).

The span at 167-184 (AAAEVEQAEDVAAAEQQD) shows a compositional bias: low complexity. The tract at residues 167-220 (AAAEVEQAEDVAAAEQQDSSPVDDHADDADGVADGEGRDEGAGDASDEEEMPST) is disordered. Acidic residues predominate over residues 211-220 (ASDEEEMPST).

It belongs to the bacterial ribosomal protein bL9 family.

Its function is as follows. Binds to the 23S rRNA. In Anaplasma marginale (strain Florida), this protein is Large ribosomal subunit protein bL9.